A 672-amino-acid chain; its full sequence is Fumonisin cluster-specific transcription factor FUM21 (672 aa).

The segment at residues 30–56 (CESCKRRKVRCNGTNPCNQCQKSSIEC) is a DNA-binding region (zn(2)-C6 fungal-type). Disordered stretches follow at residues 65-111 (ANDG…RFDG) and 190-212 (KSSGPSYGMSEPPSRDSDPGFNT). The span at 77–93 (SPVQHTRGSLTPPQTSP) shows a compositional bias: polar residues.

The protein resides in the nucleus. Its function is as follows. Transcription factor that regulates the expression of the gene cluster that mediates the biosynthesis of fumonisins B1 (FB1), B2 (FB2), B3 (FB3), and B4 (FB4), which are carcinogenic mycotoxins. The polypeptide is Fumonisin cluster-specific transcription factor FUM21 (FUM21) (Gibberella moniliformis (strain M3125 / FGSC 7600) (Maize ear and stalk rot fungus)).